Reading from the N-terminus, the 284-residue chain is Nucleotide-binding protein Shewmr7_3352 (284 aa).

8–15 (GRSGSGKS) lines the ATP pocket. GTP is bound at residue 56–59 (DVRN).

This sequence belongs to the RapZ-like family.

In terms of biological role, displays ATPase and GTPase activities. The chain is Nucleotide-binding protein Shewmr7_3352 from Shewanella sp. (strain MR-7).